Reading from the N-terminus, the 79-residue chain is Apolipoprotein C-II (79 aa).

A signal peptide spans 1–21 (MDLKVVAVSFLLLVLCSEAAG). Positions 45–52 (GVEKLRDI) are lipid binding. The interval 56-79 (SVDAVGTYTSILTDQLYHWWCGEQ) is lipoprotein lipase cofactor.

Belongs to the apolipoprotein C2 family. Proapolipoprotein C-II is synthesized as a sialic acid containing glycoprotein which is subsequently desialylated prior to its proteolytic processing. Post-translationally, proapolipoprotein C-II, the major form found in plasma undergoes proteolytic cleavage of its N-terminal hexapeptide to generate apolipoprotein C-II, which occurs as the minor form in plasma.

It is found in the secreted. Component of chylomicrons, very low-density lipoproteins (VLDL), low-density lipoproteins (LDL), and high-density lipoproteins (HDL) in plasma. Plays an important role in lipoprotein metabolism as an activator of lipoprotein lipase. Both proapolipoprotein C-II and apolipoprotein C-II can activate lipoprotein lipase. The sequence is that of Apolipoprotein C-II (APOC2) from Alligator mississippiensis (American alligator).